We begin with the raw amino-acid sequence, 260 residues long: MFEINVDPVAFSIGSLVVKWYGIMMALGVIALVSWIFWRIKRGADISYDTVLTAAIIAIPSGIIFSKLLHVIDAWEYYSLNPGAILSGEGLTIFGAIIGATIGLWIYSRYSHFNLGYLLDVAVPGILLGQAIGRVGCLLNGCCYGEYGGSGCSVIYTNPASAAPYGVEVVPTQAYEIIFLLCLFAFSLFIAKKLRPDGQLFLLYISLYAAWRVAIGFVRVNDDFALGLEQAQVVGLILIALAVPFFIYRQRKQKEADKNT.

4 helical membrane-spanning segments follow: residues 17 to 37, 52 to 72, 85 to 105, and 113 to 133; these read VVKW…SWIF, LTAA…LHVI, ILSG…IGLW, and FNLG…QAIG. An a 1,2-diacyl-sn-glycero-3-phospho-(1'-sn-glycerol)-binding site is contributed by Arg-134. 3 helical membrane passes run 170–190, 198–218, and 227–247; these read VPTQ…SLFI, GQLF…IGFV, and GLEQ…PFFI.

This sequence belongs to the Lgt family.

The protein resides in the cell membrane. The enzyme catalyses L-cysteinyl-[prolipoprotein] + a 1,2-diacyl-sn-glycero-3-phospho-(1'-sn-glycerol) = an S-1,2-diacyl-sn-glyceryl-L-cysteinyl-[prolipoprotein] + sn-glycerol 1-phosphate + H(+). It participates in protein modification; lipoprotein biosynthesis (diacylglyceryl transfer). Functionally, catalyzes the transfer of the diacylglyceryl group from phosphatidylglycerol to the sulfhydryl group of the N-terminal cysteine of a prolipoprotein, the first step in the formation of mature lipoproteins. This Dehalococcoides mccartyi (strain ATCC BAA-2266 / KCTC 15142 / 195) (Dehalococcoides ethenogenes (strain 195)) protein is Phosphatidylglycerol--prolipoprotein diacylglyceryl transferase.